The sequence spans 406 residues: MAMKSQKAKPISNKSKLERSPIEMEVVSHLKQLQGEHAIAVGLSGGVDSSLTAALLVEAGWKVEGLTLWLMEGKGSCCTEGLVDAAGICEQLKIPHHVVDERSTFQKEVVENLVNGYQEGITPLPCSRCNRFVKFSPMINWARKNRNLKRIATGHYARIKHAETNKLNSLDERKNRHQLLRGIDQNKDQSYFLYDLSQEILGHVVFPLGALTKSFTRKEANRYGLRTANKKESQDLCLAEKHGSMKAFLNNYLPPRKGEIVLTDGLVVGEHDGIEHFTIGQRKGLGIAWKEPLHVINIQPSLNRVIVGPRDQSGRSNCTVGEVNWVSISAPMQERLVEVQVRYRSDPVKAKLVPIEPTIKDIKNNRPHRCRIEFENPQFSISPGQAAVFYKGEVVLGGGIIQPFEY.

ATP is bound by residues glycine 42–serine 49 and leucine 68. Cysteine 129 functions as the Nucleophile in the catalytic mechanism. Cysteine 129 and cysteine 237 form a disulfide bridge. Glycine 154 provides a ligand contact to ATP. An interaction with tRNA region spans residues lysine 187–glutamine 189. Cysteine 237 (cysteine persulfide intermediate) is an active-site residue. Residues arginine 342–tyrosine 343 are interaction with tRNA.

Belongs to the MnmA/TRMU family.

Its subcellular location is the cytoplasm. It carries out the reaction S-sulfanyl-L-cysteinyl-[protein] + uridine(34) in tRNA + AH2 + ATP = 2-thiouridine(34) in tRNA + L-cysteinyl-[protein] + A + AMP + diphosphate + H(+). Its function is as follows. Catalyzes the 2-thiolation of uridine at the wobble position (U34) of tRNA, leading to the formation of s(2)U34. This chain is tRNA-specific 2-thiouridylase MnmA, found in Prochlorococcus marinus (strain MIT 9211).